A 354-amino-acid polypeptide reads, in one-letter code: Uroporphyrinogen decarboxylase (354 aa).

Substrate is bound by residues 27 to 31, Asp77, Tyr154, Ser209, and His327; that span reads RQAGR.

It belongs to the uroporphyrinogen decarboxylase family. As to quaternary structure, homodimer.

The protein localises to the cytoplasm. The catalysed reaction is uroporphyrinogen III + 4 H(+) = coproporphyrinogen III + 4 CO2. It participates in porphyrin-containing compound metabolism; protoporphyrin-IX biosynthesis; coproporphyrinogen-III from 5-aminolevulinate: step 4/4. Its function is as follows. Catalyzes the decarboxylation of four acetate groups of uroporphyrinogen-III to yield coproporphyrinogen-III. This Pseudoalteromonas translucida (strain TAC 125) protein is Uroporphyrinogen decarboxylase.